A 385-amino-acid chain; its full sequence is Bifunctional chorismate mutase/prephenate dehydratase (385 aa).

A Chorismate mutase domain is found at 1 to 92 (MPANNSLLIF…ESVATQKKLL (92 aa)). Substrate contacts are provided by R11, R28, K39, D48, E52, S84, and Q88. Positions 105-285 (NFSFLGPKGS…NITRFILLNR (181 aa)) constitute a Prephenate dehydratase domain. The tract at residues 286 to 385 (NPKKISKNIP…PSEKITPIAP (100 aa)) is regulatory. An ACT domain is found at 299-376 (TLIFTTGQEA…RFIKILGCYP (78 aa)).

The protein localises to the cytoplasm. It carries out the reaction chorismate = prephenate. The enzyme catalyses prephenate + H(+) = 3-phenylpyruvate + CO2 + H2O. The protein operates within amino-acid biosynthesis; L-phenylalanine biosynthesis; phenylpyruvate from prephenate: step 1/1. It participates in metabolic intermediate biosynthesis; prephenate biosynthesis; prephenate from chorismate: step 1/1. Functionally, catalyzes the Claisen rearrangement of chorismate to prephenate and the decarboxylation/dehydration of prephenate to phenylpyruvate. This chain is Bifunctional chorismate mutase/prephenate dehydratase (pheA), found in Buchnera aphidicola subsp. Acyrthosiphon pisum (strain APS) (Acyrthosiphon pisum symbiotic bacterium).